Reading from the N-terminus, the 137-residue chain is Urease subunit beta (137 aa).

The tract at residues Ile-118 to Arg-137 is disordered. Residues Ser-126–Arg-137 are compositionally biased toward polar residues.

The protein belongs to the urease beta subunit family. In terms of assembly, heterotrimer of UreA (gamma), UreB (beta) and UreC (alpha) subunits. Three heterotrimers associate to form the active enzyme.

Its subcellular location is the cytoplasm. The enzyme catalyses urea + 2 H2O + H(+) = hydrogencarbonate + 2 NH4(+). It participates in nitrogen metabolism; urea degradation; CO(2) and NH(3) from urea (urease route): step 1/1. This is Urease subunit beta from Staphylococcus xylosus.